The primary structure comprises 633 residues: DEAD-box ATP-dependent RNA helicase 37 (633 aa).

Residues methionine 1–arginine 110 form a disordered region. Serine 2 carries the N-acetylserine modification. The span at serine 11–proline 25 shows a compositional bias: polar residues. 2 stretches are compositionally biased toward gly residues: residues glycine 68–tyrosine 80 and proline 87–tryptophan 101. Residues asparagine 159–arginine 187 carry the Q motif motif. The 185-residue stretch at isoleucine 190 to leucine 374 folds into the Helicase ATP-binding domain. Alanine 203 to threonine 210 is an ATP binding site. Positions aspartate 318–aspartate 321 match the DEAD box motif. One can recognise a Helicase C-terminal domain in the interval histidine 401 to alanine 552. The disordered stretch occupies residues serine 555 to tyrosine 600. Gly residues predominate over residues phenylalanine 580 to tyrosine 600.

This sequence belongs to the DEAD box helicase family. DDX3/DED1 subfamily.

It carries out the reaction ATP + H2O = ADP + phosphate + H(+). The protein is DEAD-box ATP-dependent RNA helicase 37 (RH37) of Arabidopsis thaliana (Mouse-ear cress).